Here is a 634-residue protein sequence, read N- to C-terminus: Ras and EF-hand domain-containing protein homolog (634 aa).

EF-hand domains follow at residues 5 to 33 (EVENLFSLCDSESKGYLTMEDLRKVCPQL) and 33 to 68 (LDDNDLRFIFTELDQDGSGKIEKLEFLRGFQDTVQH). 5 residues coordinate Ca(2+): aspartate 46, aspartate 48, serine 50, lysine 52, and glutamate 57. Residues 169-310 (LSEKKHENER…RCEFDQKQDE (142 aa)) adopt a coiled-coil conformation. The interval 212–234 (ARQEERDRLTKEKEEMRQRMSDE) is disordered. GTP contacts are provided by residues 449 to 454 (AVGKSS), 552 to 555 (NKVD), and 585 to 586 (AL). The propeptide at 632–634 (RGS) is removed in mature form.

This sequence belongs to the small GTPase superfamily. Rab family. As to quaternary structure, homodimer.

The protein resides in the cytoplasm. Its subcellular location is the perinuclear region. Functionally, binds GTP and GDP. Plays a role in uterine seam cell development. The chain is Ras and EF-hand domain-containing protein homolog from Caenorhabditis elegans.